The primary structure comprises 147 residues: Hemoglobin subunit epsilon (147 aa).

One can recognise a Globin domain in the interval 3–147; it reads HFTAEEKAAV…VAIALAHKYH (145 aa). Phosphoserine is present on residues Ser14 and Ser51. Residues His64 and His93 each coordinate heme b.

The protein belongs to the globin family. In terms of assembly, heterotetramer of two alpha chains and two epsilon chains in early embryonic hemoglobin Gower-2; two zeta chains and two epsilon chains in early embryonic hemoglobin Gower-1. In terms of tissue distribution, red blood cells.

The epsilon chain is a beta-type chain of early mammalian embryonic hemoglobin. The chain is Hemoglobin subunit epsilon (HBE1) from Pongo pygmaeus (Bornean orangutan).